Reading from the N-terminus, the 143-residue chain is uncharacterized protein (143 aa).

The helical transmembrane segment at 65-85 (LVWMLVGTIVLSLDIIFPALV) threads the bilayer.

It is found in the membrane. This is an uncharacterized protein from Saccharomyces cerevisiae (strain ATCC 204508 / S288c) (Baker's yeast).